A 212-amino-acid polypeptide reads, in one-letter code: High frequency lysogenization protein HflD homolog (212 aa).

Belongs to the HflD family.

It is found in the cytoplasm. Its subcellular location is the cell inner membrane. In Stutzerimonas stutzeri (strain A1501) (Pseudomonas stutzeri), this protein is High frequency lysogenization protein HflD homolog.